The chain runs to 545 residues: Glucose-6-phosphate isomerase (545 aa).

Catalysis depends on glutamate 351, which acts as the Proton donor. Residues histidine 382 and lysine 510 contribute to the active site.

Belongs to the GPI family.

Its subcellular location is the cytoplasm. The catalysed reaction is alpha-D-glucose 6-phosphate = beta-D-fructose 6-phosphate. The protein operates within carbohydrate biosynthesis; gluconeogenesis. It participates in carbohydrate degradation; glycolysis; D-glyceraldehyde 3-phosphate and glycerone phosphate from D-glucose: step 2/4. In terms of biological role, catalyzes the reversible isomerization of glucose-6-phosphate to fructose-6-phosphate. In Helicobacter pylori (strain J99 / ATCC 700824) (Campylobacter pylori J99), this protein is Glucose-6-phosphate isomerase.